A 156-amino-acid polypeptide reads, in one-letter code: MPRRREVPKREVLPDPKFASQDVSKFINVIMQSGKKSVAERIVYGAFDHITAKASKDPLEVFAAAVANVKPVVEVKSRRVGGANYQVPVEVRPSRRMALSMRWLREAARKRAEKSMAQRLAGELLEAAEGRGAAMKKREEVHRMAEANKAFSHYRF.

It belongs to the universal ribosomal protein uS7 family. As to quaternary structure, part of the 30S ribosomal subunit. Contacts proteins S9 and S11.

Functionally, one of the primary rRNA binding proteins, it binds directly to 16S rRNA where it nucleates assembly of the head domain of the 30S subunit. Is located at the subunit interface close to the decoding center, probably blocks exit of the E-site tRNA. This is Small ribosomal subunit protein uS7 from Azoarcus sp. (strain BH72).